The chain runs to 341 residues: Tryptophan--tRNA ligase (341 aa).

ATP contacts are provided by residues 11–13 (RPT) and 19–20 (GH). The short motif at 12-20 (PTGKLHIGH) is the 'HIGH' region element. An L-tryptophan-binding site is contributed by aspartate 140. ATP-binding positions include 152–154 (GTD), leucine 194, and 202–206 (KMSKS). The 'KMSKS' region signature appears at 202 to 206 (KMSKS).

This sequence belongs to the class-I aminoacyl-tRNA synthetase family. In terms of assembly, homodimer.

The protein resides in the cytoplasm. It carries out the reaction tRNA(Trp) + L-tryptophan + ATP = L-tryptophyl-tRNA(Trp) + AMP + diphosphate + H(+). Its function is as follows. Catalyzes the attachment of tryptophan to tRNA(Trp). The chain is Tryptophan--tRNA ligase from Streptococcus pneumoniae serotype 4 (strain ATCC BAA-334 / TIGR4).